The sequence spans 226 residues: Ribosomal RNA large subunit methyltransferase E (226 aa).

G82, W84, D100, D116, and D140 together coordinate S-adenosyl-L-methionine. K180 acts as the Proton acceptor in catalysis.

The protein belongs to the class I-like SAM-binding methyltransferase superfamily. RNA methyltransferase RlmE family.

It localises to the cytoplasm. The catalysed reaction is uridine(2552) in 23S rRNA + S-adenosyl-L-methionine = 2'-O-methyluridine(2552) in 23S rRNA + S-adenosyl-L-homocysteine + H(+). Its function is as follows. Specifically methylates the uridine in position 2552 of 23S rRNA at the 2'-O position of the ribose in the fully assembled 50S ribosomal subunit. The chain is Ribosomal RNA large subunit methyltransferase E from Caulobacter sp. (strain K31).